A 121-amino-acid polypeptide reads, in one-letter code: MTKEQIIEAIKEMSVLELNELVKACEEEFGVSAAAPVAVVGGAAAGAAAEEKSEFDVVLTNAGANKIKVIKAVRELTGLGLKEAKEIVDGAPKTLKEAVAKEEAEDMKAKLAEVGAEVELK.

The protein belongs to the bacterial ribosomal protein bL12 family. In terms of assembly, homodimer. Part of the ribosomal stalk of the 50S ribosomal subunit. Forms a multimeric L10(L12)X complex, where L10 forms an elongated spine to which 2 to 4 L12 dimers bind in a sequential fashion. Binds GTP-bound translation factors.

Its function is as follows. Forms part of the ribosomal stalk which helps the ribosome interact with GTP-bound translation factors. Is thus essential for accurate translation. The protein is Large ribosomal subunit protein bL12 of Clostridium perfringens (strain ATCC 13124 / DSM 756 / JCM 1290 / NCIMB 6125 / NCTC 8237 / Type A).